A 111-amino-acid chain; its full sequence is Ig kappa chain V-III region CBPC 101 (111 aa).

Positions 1–23 are framework-1; the sequence is DIVLTQSPASLAVSLGQRATISC. A disulfide bridge connects residues Cys-23 and Cys-92. Residues 24-38 form a complementarity-determining-1 region; the sequence is KASQSVDYTGESYMN. The tract at residues 39–53 is framework-2; sequence WYQQNPGQSPKLLIY. Residues 54-60 are complementarity-determining-2; sequence AASNLES. The interval 61–92 is framework-3; it reads GIPARFSGSGSGTDFTLNIHPVEEEDAATYYC. A complementarity-determining-3 region spans residues 93–101; that stretch reads QQSNEDPYT. Residues 102-111 are framework-4; the sequence is FGGGTKLEIK.

The protein is Ig kappa chain V-III region CBPC 101 of Mus musculus (Mouse).